An 808-amino-acid chain; its full sequence is Aminotransferase ALT4 (808 aa).

This sequence belongs to the class-II pyridoxal-phosphate-dependent aminotransferase family. BioF subfamily. Pyridoxal 5'-phosphate serves as cofactor.

The protein operates within mycotoxin biosynthesis. In terms of biological role, aminotransferase; part of the gene cluster that mediates the biosynthesis of the host-selective toxins (HSTs) AAL-toxins, sphinganine-analog mycotoxins responsible for Alternaria stem canker on tomato by the tomato pathotype. The biosynthesis starts with the polyketide synthase ALT1-catalyzed C-16 carbon chain assembly from one starter acetyl-CoA unit with malonyl-CoA extender units. ALT1 also selectively transfers methyl groups at the first and the third cycle of chain elongation for AAL toxin. The C-16 polyketide chain is released from the enzyme by a nucleophilic attack of a carbanion, which is derived from R-carbon of glycin by decarboxylation, on the carbonyl carbon of polyketide acyl chain. This step is probably catalyzed by a pyridoxal 5'-phosphate-dependent aminoacyl transferase ALT4. The respective functions of the other enzymes encoded by the cluster have still to be elucidated. The sphingosine N-acyltransferase-like protein ALT7 seems not to act as a resistance/self-tolerance factor against the toxin in the toxin biosynthetic gene cluster, contrary to what is expected. The polypeptide is Aminotransferase ALT4 (Alternaria alternata (Alternaria rot fungus)).